The following is a 491-amino-acid chain: Chromosomal replication initiator protein DnaA (491 aa).

Residues 1–86 (MTDELNSQFT…VEALSRRLGE (86 aa)) are domain I, interacts with DnaA modulators. Positions 86-150 (ENVELGVRIA…GADKAETPDT (65 aa)) are domain II. The tract at residues 151–367 (SLNARYTFES…GALIRVTAFA (217 aa)) is domain III, AAA+ region. ATP is bound by residues G195, G197, K198, and T199. The interval 368–491 (SLNKSPIELS…TARIRQRSRH (124 aa)) is domain IV, binds dsDNA.

Belongs to the DnaA family. As to quaternary structure, oligomerizes as a right-handed, spiral filament on DNA at oriC.

The protein localises to the cytoplasm. Plays an essential role in the initiation and regulation of chromosomal replication. ATP-DnaA binds to the origin of replication (oriC) to initiate formation of the DNA replication initiation complex once per cell cycle. Binds the DnaA box (a 9 base pair repeat at the origin) and separates the double-stranded (ds)DNA. Forms a right-handed helical filament on oriC DNA; dsDNA binds to the exterior of the filament while single-stranded (ss)DNA is stabiized in the filament's interior. The ATP-DnaA-oriC complex binds and stabilizes one strand of the AT-rich DNA unwinding element (DUE), permitting loading of DNA polymerase. After initiation quickly degrades to an ADP-DnaA complex that is not apt for DNA replication. Binds acidic phospholipids. The protein is Chromosomal replication initiator protein DnaA of Mycobacteroides abscessus (strain ATCC 19977 / DSM 44196 / CCUG 20993 / CIP 104536 / JCM 13569 / NCTC 13031 / TMC 1543 / L948) (Mycobacterium abscessus).